A 294-amino-acid polypeptide reads, in one-letter code: uncharacterized protein (294 aa).

Disordered stretches follow at residues 1–148 (MFLR…LEKP) and 268–294 (DEAATDWESEGLEREGEEQRGDPGKGL). 2 positions are modified to phosphoserine: serine 34 and serine 35. Low complexity predominate over residues 35 to 44 (SSENSGSDWD). A compositionally biased stretch (basic and acidic residues) spans 52 to 62 (DVGHPKTKDSG). Phosphoserine is present on residues serine 71 and serine 90. Composition is skewed to basic and acidic residues over residues 73–92 (PSKEEPQVEQLGSKRMDSLK) and 278–294 (GLEREGEEQRGDPGKGL).

This is an uncharacterized protein from Homo sapiens (Human).